A 213-amino-acid chain; its full sequence is Probable RNA 2'-phosphotransferase (213 aa).

It belongs to the KptA/TPT1 family.

Its function is as follows. Removes the 2'-phosphate from RNA via an intermediate in which the phosphate is ADP-ribosylated by NAD followed by a presumed transesterification to release the RNA and generate ADP-ribose 1''-2''-cyclic phosphate (APPR&gt;P). May function as an ADP-ribosylase. This is Probable RNA 2'-phosphotransferase from Pyrobaculum aerophilum (strain ATCC 51768 / DSM 7523 / JCM 9630 / CIP 104966 / NBRC 100827 / IM2).